A 407-amino-acid polypeptide reads, in one-letter code: Melanoma-associated antigen B6 (407 aa).

The tract at residues 1–175 is disordered; the sequence is MPRGHKSKLR…YDVAAEGEDE (175 aa). Composition is skewed to polar residues over residues 18-29, 57-71, 94-113, and 136-155; these read TNGQPQGLTGPQ, DASI…SPTG, and PSTS…SPTG. An MAGE domain is found at 195–394; that stretch reads VKKKACTLAQ…GLYPHLYEDA (200 aa).

Expressed in testis. Not expressed in other normal tissues, but is expressed in tumors of different histological origins.

The chain is Melanoma-associated antigen B6 (MAGEB6) from Homo sapiens (Human).